A 101-amino-acid chain; its full sequence is uncharacterized protein (101 aa).

2 helical membrane passes run 3–23 (IVYE…LFLF) and 39–59 (AFLS…LIFF).

It localises to the membrane. This is an uncharacterized protein from Saccharomyces cerevisiae (strain ATCC 204508 / S288c) (Baker's yeast).